Reading from the N-terminus, the 475-residue chain is Doublecortin domain-containing protein 2 (475 aa).

Doublecortin domains are found at residues 17–100 (KSVL…LNYL) and 139–221 (CTIF…LPYS). A disordered region spans residues 234-475 (YGQKASSLPP…EANKASSAVA (242 aa)). Residues 252 to 272 (GSGNYRQSKSTIGSSDNSSPQ) are compositionally biased toward polar residues. The residue at position 270 (S270) is a Phosphoserine. The segment covering 353-365 (EKTSKDANQKEDF) has biased composition (basic and acidic residues). Residues 407–425 (TDEENGEELDQVAEELQPT) show a composition bias toward acidic residues.

As to quaternary structure, interacts with DVL1, DVL2 and DVL3. Expressed in hair cells of the inner ear.

Its subcellular location is the cell projection. The protein localises to the cilium. It is found in the cytoplasm. It localises to the cytoskeleton. The protein resides in the cilium axoneme. Its subcellular location is the kinocilium. Protein that plays a role in the inhibition of canonical Wnt signaling pathway. May be involved in neuronal migration during development of the cerebral neocortex. Involved in the control of ciliogenesis and ciliary length. The protein is Doublecortin domain-containing protein 2 (Dcdc2) of Mus musculus (Mouse).